Here is a 516-residue protein sequence, read N- to C-terminus: (R)-citramalate synthase CimA (516 aa).

The region spanning 8–269 is the Pyruvate carboxyltransferase domain; the sequence is LEILDVTLRD…KTNINEIAIT (262 aa). Arg16 acts as the Proton donor in catalysis. Pyruvate is bound by residues 16–17 and Tyr144; that span reads RD. Residue Asp17 coordinates Mn(2+). Glu146 acts as the Proton acceptor in catalysis. Residue Thr179 coordinates pyruvate. Residues His207 and His209 each coordinate Mn(2+).

It belongs to the alpha-IPM synthase/homocitrate synthase family. As to quaternary structure, homodimer. It depends on Mn(2+) as a cofactor.

The catalysed reaction is pyruvate + acetyl-CoA + H2O = (3R)-citramalate + CoA + H(+). The protein operates within amino-acid biosynthesis; L-isoleucine biosynthesis; 2-oxobutanoate from pyruvate: step 1/3. Its activity is regulated as follows. Regulated by the end-product isoleucine via a feedback inhibition. The binding of isoleucine has inhibitory effects on the binding of both pyruvate and acetyl-CoA. May act via conformational change of the dimer interface of the regulatory domain, leading to inhibition of the catalytic reaction. Its function is as follows. Catalyzes the condensation of pyruvate and acetyl-coenzyme A to form (R)-citramalate. Shows strict substrate specificity for pyruvate. Cannot use alpha-ketoisovalerate, alpha-ketobutyrate, alpha-ketoisocaproate, alpha-ketoglutarate or glyoxylate. The sequence is that of (R)-citramalate synthase CimA from Leptospira interrogans serogroup Icterohaemorrhagiae serovar Lai (strain 56601).